A 264-amino-acid chain; its full sequence is 4-oxalocrotonate decarboxylase (264 aa).

The protein belongs to the hydratase/decarboxylase family.

The enzyme catalyses (3E)-2-oxohex-3-enedioate + H(+) = 2-oxopent-4-enoate + CO2. It participates in xenobiotic degradation; toluene degradation. This is 4-oxalocrotonate decarboxylase (xylI) from Pseudomonas putida (Arthrobacter siderocapsulatus).